The sequence spans 292 residues: Nucleotide-binding protein AZOSEA20610 (292 aa).

8-15 (GLSGSGKS) lines the ATP pocket. GTP is bound at residue 57-60 (DVRS).

This sequence belongs to the RapZ-like family.

Functionally, displays ATPase and GTPase activities. The polypeptide is Nucleotide-binding protein AZOSEA20610 (Aromatoleum aromaticum (strain DSM 19018 / LMG 30748 / EbN1) (Azoarcus sp. (strain EbN1))).